A 302-amino-acid polypeptide reads, in one-letter code: Riboflavin transporter (302 aa).

8 consecutive transmembrane segments (helical) span residues 16 to 36, 44 to 64, 87 to 107, 109 to 129, 158 to 178, 191 to 213, 227 to 247, and 264 to 284; these read AVVGALWMVLAGIAFSLLNVV, LAFPSASAAFWQYGFAFLFSL, VVLAALGVEAWVAGLAAVPIW, AIALVMTSPFFIILGARLFLG, IGWAALLPVLSALLWGASSLI, ITVWLLVLLTPINGGLALAAGFA, GLLTAVAQYFLTLAYAAADAA, and GWLFFGYAPAGYLWLGAALIL. EamA domains follow at residues 30–151 and 170–291; these read FSLL…MIIL and LLWG…LFIM.

Belongs to the drug/metabolite transporter (DMT) superfamily. 10 TMS drug/metabolite exporter (DME) (TC 2.A.7.3) family.

Its subcellular location is the cell membrane. In terms of biological role, transports riboflavin into the cell. Can also transport FMN and FAD. Required for normal nodule development during colonization of pea plant roots. The chain is Riboflavin transporter from Rhizobium johnstonii (strain DSM 114642 / LMG 32736 / 3841) (Rhizobium leguminosarum bv. viciae).